The sequence spans 314 residues: MDKNQTEVMREFFLSGFSQTPSIEAGLFVLFLFFYMSIWVGNVLIMVTVASDKYLNSSPMYFLLGNLSFLDLCYSTVTTPKLLADFFNHEKLISYDQCIVQLFFLHFVGAAEMFLLTVMAYDRYVAICRPLHYTTVMSRGLCCVLVAASWMGGFVHSTVQTILTVHLPFCGPNQVENTFFCDVPPVIKLACADTFVIELLMVSNSGLISTISFVVLISSYTTILVKIRSKEGRRKALSTCASHLMVVTLFFGPCIFIYARPFSTFSVDKMVSVLYNVITPMLNPLIYTLRNKEVKSAMQKLWVRNGLTWKKQET.

At 1-26 (MDKNQTEVMREFFLSGFSQTPSIEAG) the chain is on the extracellular side. An N-linked (GlcNAc...) asparagine glycan is attached at Asn4. Residues 27–47 (LFVLFLFFYMSIWVGNVLIMV) form a helical membrane-spanning segment. At 48-61 (TVASDKYLNSSPMY) the chain is on the cytoplasmic side. The helical transmembrane segment at 62–84 (FLLGNLSFLDLCYSTVTTPKLLA) threads the bilayer. The Extracellular segment spans residues 85–98 (DFFNHEKLISYDQC). Cys98 and Cys181 form a disulfide bridge. The helical transmembrane segment at 99 to 119 (IVQLFFLHFVGAAEMFLLTVM) threads the bilayer. The Cytoplasmic segment spans residues 120 to 142 (AYDRYVAICRPLHYTTVMSRGLC). The helical transmembrane segment at 143 to 163 (CVLVAASWMGGFVHSTVQTIL) threads the bilayer. Topologically, residues 164-196 (TVHLPFCGPNQVENTFFCDVPPVIKLACADTFV) are extracellular. Residues 197–217 (IELLMVSNSGLISTISFVVLI) form a helical membrane-spanning segment. The Cytoplasmic portion of the chain corresponds to 218-236 (SSYTTILVKIRSKEGRRKA). Residues 237–257 (LSTCASHLMVVTLFFGPCIFI) form a helical membrane-spanning segment. The Extracellular portion of the chain corresponds to 258–268 (YARPFSTFSVD). A helical membrane pass occupies residues 269–289 (KMVSVLYNVITPMLNPLIYTL). The Cytoplasmic portion of the chain corresponds to 290–314 (RNKEVKSAMQKLWVRNGLTWKKQET).

This sequence belongs to the G-protein coupled receptor 1 family.

The protein resides in the cell membrane. In terms of biological role, odorant receptor. This Homo sapiens (Human) protein is Olfactory receptor 4Q2 (OR4Q2).